We begin with the raw amino-acid sequence, 400 residues long: Signal recognition particle receptor FtsY (400 aa).

Disordered regions lie at residues 12-37 (TKKT…QEEQ) and 51-86 (NKIK…KDKK). Over residues 51-72 (NKIKKTKTSETKKQEKPIETLK) the composition is skewed to basic and acidic residues. Residues 192–199 (GVNGTGKT), 278–282 (DTAGR), and 342–345 (TKMD) contribute to the GTP site.

This sequence belongs to the GTP-binding SRP family. FtsY subfamily. As to quaternary structure, part of the signal recognition particle protein translocation system, which is composed of SRP and FtsY.

It localises to the cell membrane. Its subcellular location is the cytoplasm. The catalysed reaction is GTP + H2O = GDP + phosphate + H(+). Involved in targeting and insertion of nascent membrane proteins into the cytoplasmic membrane. Acts as a receptor for the complex formed by the signal recognition particle (SRP) and the ribosome-nascent chain (RNC). The sequence is that of Signal recognition particle receptor FtsY from Mycoplasma mycoides subsp. mycoides SC (strain CCUG 32753 / NCTC 10114 / PG1).